The chain runs to 61 residues: Photosystem II reaction center protein K (61 aa).

A propeptide spanning residues 1–24 (MLNIFSLISICLNSALYSSSFFFG) is cleaved from the precursor. A helical membrane pass occupies residues 40–60 (MPVIPVFFFLLAFVWQAAVSF).

This sequence belongs to the PsbK family. In terms of assembly, PSII is composed of 1 copy each of membrane proteins PsbA, PsbB, PsbC, PsbD, PsbE, PsbF, PsbH, PsbI, PsbJ, PsbK, PsbL, PsbM, PsbT, PsbX, PsbY, PsbZ, Psb30/Ycf12, at least 3 peripheral proteins of the oxygen-evolving complex and a large number of cofactors. It forms dimeric complexes.

The protein localises to the plastid. The protein resides in the chloroplast thylakoid membrane. One of the components of the core complex of photosystem II (PSII). PSII is a light-driven water:plastoquinone oxidoreductase that uses light energy to abstract electrons from H(2)O, generating O(2) and a proton gradient subsequently used for ATP formation. It consists of a core antenna complex that captures photons, and an electron transfer chain that converts photonic excitation into a charge separation. The protein is Photosystem II reaction center protein K of Jasminum nudiflorum (Winter jasmine).